Consider the following 294-residue polypeptide: Acetyl-coenzyme A carboxylase carboxyl transferase subunit beta (294 aa).

Residues 25–294 form the CoA carboxyltransferase N-terminal domain; the sequence is IWTKCDNCGQ…PKVDYRHCVE (270 aa). Zn(2+)-binding residues include cysteine 29, cysteine 32, cysteine 48, and cysteine 51. A C4-type zinc finger spans residues 29–51; that stretch reads CDNCGQLLYKKELERNLEVCPKC.

This sequence belongs to the AccD/PCCB family. In terms of assembly, acetyl-CoA carboxylase is a heterohexamer composed of biotin carboxyl carrier protein (AccB), biotin carboxylase (AccC) and two subunits each of ACCase subunit alpha (AccA) and ACCase subunit beta (AccD). Zn(2+) serves as cofactor.

It is found in the cytoplasm. The catalysed reaction is N(6)-carboxybiotinyl-L-lysyl-[protein] + acetyl-CoA = N(6)-biotinyl-L-lysyl-[protein] + malonyl-CoA. It participates in lipid metabolism; malonyl-CoA biosynthesis; malonyl-CoA from acetyl-CoA: step 1/1. Functionally, component of the acetyl coenzyme A carboxylase (ACC) complex. Biotin carboxylase (BC) catalyzes the carboxylation of biotin on its carrier protein (BCCP) and then the CO(2) group is transferred by the transcarboxylase to acetyl-CoA to form malonyl-CoA. The chain is Acetyl-coenzyme A carboxylase carboxyl transferase subunit beta from Blochmanniella pennsylvanica (strain BPEN).